The chain runs to 450 residues: Probable helicase D10 (450 aa).

Positions 95–240 (PIYEECDDTC…MFKDFFGYKI (146 aa)) constitute a Helicase ATP-binding domain. 108 to 115 (GKPGFGKT) contributes to the ATP binding site. The DEAH box motif lies at 193 to 196 (DEVH). The region spanning 289 to 439 (NLAHLYVNMG…TITMTPEKAV (151 aa)) is the Helicase C-terminal domain.

It carries out the reaction ATP + H2O = ADP + phosphate + H(+). This Escherichia phage T5 (Enterobacteria phage T5) protein is Probable helicase D10 (D10).